Consider the following 111-residue polypeptide: Ferredoxin-thioredoxin reductase, catalytic chain (111 aa).

Cys-52 serves as a coordination point for [4Fe-4S] cluster. Cys-54 functions as the Nucleophile in the catalytic mechanism. Cysteines 54 and 84 form a disulfide. Residues Cys-71, Cys-73, and Cys-82 each contribute to the [4Fe-4S] cluster site.

It belongs to the ferredoxin thioredoxin reductase beta subunit family. Heterodimer of subunit A (variable subunit) and subunit B (catalytic subunit). Heterodimeric FTR forms a complex with ferredoxin and thioredoxin. The cofactor is [4Fe-4S] cluster.

The protein resides in the plastid. The protein localises to the chloroplast. The enzyme catalyses [thioredoxin]-disulfide + 2 reduced [2Fe-2S]-[ferredoxin] + 2 H(+) = [thioredoxin]-dithiol + 2 oxidized [2Fe-2S]-[ferredoxin]. Functionally, catalytic subunit of the ferredoxin-thioredoxin reductase (FTR), which catalyzes the two-electron reduction of thioredoxins by the electrons provided by reduced ferredoxin. In Cyanidium caldarium (Red alga), this protein is Ferredoxin-thioredoxin reductase, catalytic chain (ftrB).